The primary structure comprises 181 residues: CASP-like protein UU-1 (181 aa).

Topologically, residues 1–30 (MTMELESQEVVVETTTAAAAARAASAAHVR) are cytoplasmic. Residues 31–51 (TTVALRLLAFAASLAAAVVVA) form a helical membrane-spanning segment. Topologically, residues 52-65 (TNRQERWGITVTFK) are extracellular. Residues 66–86 (MFAVWEAFVAINFACAAYALL) form a helical membrane-spanning segment. Over 87-107 (TAVFVKKLVSKHWLHHMDQFT) the chain is Cytoplasmic. Residues 108–128 (VNLQAASTAGAGAVGSVAMWG) form a helical membrane-spanning segment. The Extracellular segment spans residues 129–147 (NEPSGWYAVCRLYRLYCDR). Residues 148-168 (GAVSLALAFVAFVAFGVASSL) form a helical membrane-spanning segment. Residues 169–181 (SRYPRAPPPPAPR) lie on the Cytoplasmic side of the membrane.

It belongs to the Casparian strip membrane proteins (CASP) family. In terms of assembly, homodimer and heterodimers.

It localises to the cell membrane. In Sorghum bicolor (Sorghum), this protein is CASP-like protein UU-1.